The sequence spans 497 residues: Tripartite motif-containing protein 5 (497 aa).

At Ala-2 the chain carries N-acetylalanine. The segment at 15–60 (CPICLELLTEPLSLPCGHSFCQACITANHRKSMLYKEGERSCPVCR) adopts an RING-type zinc-finger fold. Ser-87 bears the Phosphoserine mark. The segment at 92 to 133 (LKVDHCARHGEKLLLFCQEDSKVICWLCERSQEHRGHHTFLM) adopts a B box-type zinc-finger fold. Residues Cys-97, His-100, Cys-119, and His-125 each contribute to the Zn(2+) site. Positions 137–225 (AQEYHVKLQT…LTKSETEMVQ (89 aa)) form a coiled coil. The interval 187–200 (FEQLREILDWEESN) is required for interaction with GABARAP and for autophagy. Residues 283–497 (LKGMLDMFRE…VPMTLCSPSS (215 aa)) form the B30.2/SPRY domain.

This sequence belongs to the TRIM/RBCC family. In terms of assembly, can form homodimers and homotrimers. In addition to lower-order dimerization, also exhibits a higher-order multimerization and both low- and high-order multimerizations are essential for its restriction activity. Interacts with BTBD1 and BTBD2. Interacts with PSMC4, PSMC5, PSMD7 and HSPA8/HSC70. Interacts (via B30.2/SPRY domain) with HSPA1A/B. Interacts with PSMC2, MAP3K7/TAK1, TAB2 and TAB3. Interacts with SQSTM1. Interacts with TRIM6 and TRIM34. Interacts with ULK1 (phosphorylated form), GABARAP, GABARAPL1, GABARAPL2, MAP1LC3A, MAP1LC3C and BECN1. Degraded in a proteasome-independent fashion in the absence of viral infection but in a proteasome-dependent fashion following exposure to restriction sensitive virus. In terms of processing, autoubiquitinated in a RING finger- and UBE2D2-dependent manner. Monoubiquitinated by TRIM21. Deubiquitinated by Yersinia YopJ. Ubiquitination may not lead to proteasomal degradation.

The protein resides in the cytoplasm. Its subcellular location is the nucleus. The enzyme catalyses S-ubiquitinyl-[E2 ubiquitin-conjugating enzyme]-L-cysteine + [acceptor protein]-L-lysine = [E2 ubiquitin-conjugating enzyme]-L-cysteine + N(6)-ubiquitinyl-[acceptor protein]-L-lysine.. It functions in the pathway protein modification; protein ubiquitination. Functionally, capsid-specific restriction factor that prevents infection from non-host-adapted retroviruses. Blocks viral replication early in the life cycle, after viral entry but before reverse transcription. In addition to acting as a capsid-specific restriction factor, also acts as a pattern recognition receptor that activates innate immune signaling in response to the retroviral capsid lattice. Binding to the viral capsid triggers its E3 ubiquitin ligase activity, and in concert with the heterodimeric ubiquitin conjugating enzyme complex UBE2V1-UBE2N (also known as UBC13-UEV1A complex) generates 'Lys-63'-linked polyubiquitin chains, which in turn are catalysts in the autophosphorylation of the MAP3K7/TAK1 complex (includes TAK1, TAB2, and TAB3). Activation of the MAP3K7/TAK1 complex by autophosphorylation results in the induction and expression of NF-kappa-B and MAPK-responsive inflammatory genes, thereby leading to an innate immune response in the infected cell. Plays a role in regulating autophagy through activation of autophagy regulator BECN1 by causing its dissociation from its inhibitors BCL2 and TAB2. The protein is Tripartite motif-containing protein 5 (TRIM5) of Papio anubis (Olive baboon).